A 296-amino-acid chain; its full sequence is tRNA U34 carboxymethyltransferase (296 aa).

Carboxy-S-adenosyl-L-methionine contacts are provided by residues Lys-64, Trp-78, Lys-83, Gly-102, 124-126, 151-152, Tyr-171, and Arg-286; these read DPS and VE.

The protein belongs to the class I-like SAM-binding methyltransferase superfamily. CmoB family. Homotetramer.

It catalyses the reaction carboxy-S-adenosyl-L-methionine + 5-hydroxyuridine(34) in tRNA = 5-carboxymethoxyuridine(34) in tRNA + S-adenosyl-L-homocysteine + H(+). Functionally, catalyzes carboxymethyl transfer from carboxy-S-adenosyl-L-methionine (Cx-SAM) to 5-hydroxyuridine (ho5U) to form 5-carboxymethoxyuridine (cmo5U) at position 34 in tRNAs. The chain is tRNA U34 carboxymethyltransferase from Sulfurimonas denitrificans (strain ATCC 33889 / DSM 1251) (Thiomicrospira denitrificans (strain ATCC 33889 / DSM 1251)).